Here is a 154-residue protein sequence, read N- to C-terminus: 3-hydroxyacyl-[acyl-carrier-protein] dehydratase FabZ (154 aa).

The active site involves H60.

This sequence belongs to the thioester dehydratase family. FabZ subfamily.

The protein resides in the cytoplasm. The enzyme catalyses a (3R)-hydroxyacyl-[ACP] = a (2E)-enoyl-[ACP] + H2O. In terms of biological role, involved in unsaturated fatty acids biosynthesis. Catalyzes the dehydration of short chain beta-hydroxyacyl-ACPs and long chain saturated and unsaturated beta-hydroxyacyl-ACPs. The sequence is that of 3-hydroxyacyl-[acyl-carrier-protein] dehydratase FabZ from Haemophilus ducreyi (strain 35000HP / ATCC 700724).